Consider the following 276-residue polypeptide: Large ribosomal subunit protein uL2 (276 aa).

Residues 219-268 form a disordered region; it reads TVRGSVMNPNDHPHGGGEGRQPVGRKSPMTPWGKPALGLKTRNKKAKSSK.

It belongs to the universal ribosomal protein uL2 family. In terms of assembly, part of the 50S ribosomal subunit. Forms a bridge to the 30S subunit in the 70S ribosome.

Its function is as follows. One of the primary rRNA binding proteins. Required for association of the 30S and 50S subunits to form the 70S ribosome, for tRNA binding and peptide bond formation. It has been suggested to have peptidyltransferase activity; this is somewhat controversial. Makes several contacts with the 16S rRNA in the 70S ribosome. The chain is Large ribosomal subunit protein uL2 from Lactococcus lactis subsp. lactis (strain IL1403) (Streptococcus lactis).